Consider the following 492-residue polypeptide: MDPYKHRPSSAFNSPFWTTNSGAPIWNNNSSLTVGARGPILLEDYHLVEKLANFDRERIPERVVHARGASAKGFFEVTHDISHLTCADFLRAPGVQTPVIVRFSTVIHERGSPETLRDPRGFAVKFYTREGNFDLVGNNLPVFFVRDGMKFPDMVHALKPNPKNHIQENWRILDFFSHFPESLHMFTFLFDDLGVPQDYRHMDGFGVNTYTLINKAGKAVYVKFHWKTTSGIKCLLEEEAIKVGGANHSHATQDLHDSIAAGNYPEWKLFVQTIDPEHEDKFDFDPLDVTKTWPEDIIPLQPVGRLVLNKNIDNFFAENEQLAFCPAIVVPGVYYSDDKMLQTRIFSYADSQRHRLGPNYLQLPANAPKCAHHNNHHEGFMNFIHRDEEVNYFPSRYDPVRHAERFPIPPAICSGRREKCGIEKENNFKQPGERYRSWAPDRQDRFARRWVDALSDPRVTHEIRSVWISYWSQADRSLGQKIASHLSTRPNI.

Catalysis depends on residues His65 and Asn138. Tyr348 lines the heme pocket.

This sequence belongs to the catalase family. Homotetramer. Heme serves as cofactor.

It is found in the peroxisome. It localises to the glyoxysome. The enzyme catalyses 2 H2O2 = O2 + 2 H2O. Occurs in almost all aerobically respiring organisms and serves to protect cells from the toxic effects of hydrogen peroxide. This chain is Catalase-4 (CAT4), found in Glycine max (Soybean).